The chain runs to 240 residues: Glutathione S-transferase theta-1 (240 aa).

The GST N-terminal domain occupies 2–82; sequence VLELYLDLLS…YLAHKYKVPD (81 aa). Glutathione is bound by residues histidine 40, 53-54, and 66-67; these read RV and ES. The region spanning 88–222 is the GST C-terminal domain; the sequence is DLQARARVDE…VILKVKDCPP (135 aa).

The protein belongs to the GST superfamily. Theta family. In terms of assembly, homodimer. In terms of tissue distribution, in liver, highest expression found in central vein limiting plate hepatocytes. Also expressed in interlobular bile duct epithelial cells. In lung, expressed in club cells and ciliated cells of the bronchiolar epithelium and in type II alveolar cells of the lung parenchyma.

The protein resides in the cytoplasm. It is found in the nucleus. The enzyme catalyses RX + glutathione = an S-substituted glutathione + a halide anion + H(+). In terms of biological role, conjugation of reduced glutathione to a wide number of exogenous and endogenous hydrophobic electrophiles. Also binds steroids, bilirubin, carcinogens and numerous organic anions. Has dichloromethane dehalogenase activity. The chain is Glutathione S-transferase theta-1 (Gstt1) from Mus musculus (Mouse).